Consider the following 504-residue polypeptide: Doublesex- and mab-3-related transcription factor A1 (504 aa).

Basic and acidic residues predominate over residues 1-13 (MERSQCGSRDRGV). Residues 1–27 (MERSQCGSRDRGVSGRPHLAPGLVVAA) are disordered. A DNA-binding region (DM) is located at residues 97–144 (CARCRNHGVVSALKGHKRFCRWRDCACAKCTLIAERQRVMAAQVALRR). Disordered regions lie at residues 170-192 (GRAS…AAGA) and 266-307 (SISE…NESE). Low complexity predominate over residues 293–306 (RSLSSSDLESGNES). The DMA domain maps to 327–362 (RDPLDILTKIFPNYRRSRLEGILRFCKGDVVQAIEQ).

It belongs to the DMRT family. In terms of tissue distribution, expressed in liver, kidney, pancreas, prostate and weakly detected in testis and ovary.

It is found in the nucleus. The sequence is that of Doublesex- and mab-3-related transcription factor A1 (DMRTA1) from Homo sapiens (Human).